The sequence spans 199 residues: FMN-dependent NADH:quinone oxidoreductase (199 aa).

17–19 (SYS) lines the FMN pocket.

It belongs to the azoreductase type 1 family. As to quaternary structure, homodimer. Requires FMN as cofactor.

It carries out the reaction 2 a quinone + NADH + H(+) = 2 a 1,4-benzosemiquinone + NAD(+). The enzyme catalyses N,N-dimethyl-1,4-phenylenediamine + anthranilate + 2 NAD(+) = 2-(4-dimethylaminophenyl)diazenylbenzoate + 2 NADH + 2 H(+). Its function is as follows. Quinone reductase that provides resistance to thiol-specific stress caused by electrophilic quinones. In terms of biological role, also exhibits azoreductase activity. Catalyzes the reductive cleavage of the azo bond in aromatic azo compounds to the corresponding amines. The polypeptide is FMN-dependent NADH:quinone oxidoreductase (Mycoplasmopsis synoviae (strain 53) (Mycoplasma synoviae)).